Consider the following 189-residue polypeptide: Interferon alpha-6 (189 aa).

The N-terminal stretch at 1 to 20 (MALPFALLMALVVLSCKSSC) is a signal peptide. Intrachain disulfides connect C24–C122 and C52–C162.

It belongs to the alpha/beta interferon family.

The protein localises to the secreted. Produced by macrophages, IFN-alpha have antiviral activities. Interferon stimulates the production of two enzymes: a protein kinase and an oligoadenylate synthetase. The chain is Interferon alpha-6 (IFNA6) from Homo sapiens (Human).